The sequence spans 474 residues: Aspartate ammonia-lyase (474 aa).

T105, S144, T145, N146, and T191 together coordinate L-aspartate. Positions 322-331 (GSSIMPGKVN) are SS loop. S323 acts as the Proton acceptor in catalysis. The L-aspartate site is built by S324 and K329.

It belongs to the class-II fumarase/aspartase family. Aspartase subfamily. Homotetramer.

The enzyme catalyses L-aspartate = fumarate + NH4(+). It catalyses the reaction L-phenylalanine = (E)-cinnamate + NH4(+). Its activity is regulated as follows. Does not require any divalent metal ion for activation of catalysis, but the activity is slightly increased in the presence of Mg(2+), Mn(2+), Ca(2+) or Co(2+). In terms of biological role, catalyzes the reversible conversion of L-aspartate to fumarate and ammonia. Can also utilize L-phenylalanine to form cinnamic acid. Exhibits the highest specific activity towards L-phenylalanine, but catalytic efficiency is 3-fold higher with L-aspartate. This Pseudomonas aeruginosa (strain ATCC 15692 / DSM 22644 / CIP 104116 / JCM 14847 / LMG 12228 / 1C / PRS 101 / PAO1) protein is Aspartate ammonia-lyase.